Reading from the N-terminus, the 148-residue chain is MVDWTDAERAAISSLWGKIDVGEIGPQALTRLLIVYPWTQRHFTTFGNVSTNAAILGNPKVAQHGKTVMGGLENAVKNLDDIKNTYAKLSQMHSEKLHVDPDNFRTLAECISVCVAAKFGKQVFTADVQEAWQKFLSVVVSALGRQYH.

In terms of domain architecture, Globin spans 3 to 148; it reads DWTDAERAAI…VVSALGRQYH (146 aa). Heme b is bound by residues histidine 64 and histidine 93.

This sequence belongs to the globin family. Heterotetramer of two alpha chains and two beta chains. As to expression, red blood cells.

Functionally, involved in oxygen transport from gills to the various peripheral tissues. This is Hemoglobin subunit beta-A (hbb1) from Seriola quinqueradiata (Five-ray yellowtail).